A 403-amino-acid polypeptide reads, in one-letter code: Phosphoglycerate kinase (403 aa).

Substrate-binding positions include 24–26 (DLN), R39, 62–65 (HLGR), R121, and R161. ATP is bound by residues K211, G299, E330, and 359–362 (GGDS).

It belongs to the phosphoglycerate kinase family. Monomer.

It is found in the cytoplasm. The enzyme catalyses (2R)-3-phosphoglycerate + ATP = (2R)-3-phospho-glyceroyl phosphate + ADP. It functions in the pathway carbohydrate degradation; glycolysis; pyruvate from D-glyceraldehyde 3-phosphate: step 2/5. The polypeptide is Phosphoglycerate kinase (Rhodococcus jostii (strain RHA1)).